The primary structure comprises 415 residues: WD-40 repeat-containing protein MSI2 (415 aa).

5 WD repeats span residues 166–206 (GHDK…QDKV), 215–255 (GHES…MQHQ), 258–298 (VHER…APLH), 302–342 (SHEG…EEQL), and 361–401 (GHKA…YRDE). The short motif at 232-248 (LFGSAGEDGRLVIWDTR) is the DWD box element.

The protein belongs to the WD repeat RBAP46/RBAP48/MSI1 family.

It localises to the nucleus. Its function is as follows. Core histone-binding subunit that may target chromatin assembly factors, chromatin remodeling factors and histone deacetylases to their histone substrates in a manner that is regulated by nucleosomal DNA. This Arabidopsis thaliana (Mouse-ear cress) protein is WD-40 repeat-containing protein MSI2 (MSI2).